A 134-amino-acid chain; its full sequence is Ribonuclease VapC11 (134 aa).

The PINc domain occupies 2–126 (ILIDTSAWVE…ADFDVIARIT (125 aa)). Residues Asp-5 and Asp-98 each contribute to the Mg(2+) site.

It belongs to the PINc/VapC protein family. It depends on Mg(2+) as a cofactor.

Its function is as follows. Toxic component of a type II toxin-antitoxin (TA) system. Acts as an RNase. Its toxic effects on cell growth and colony formation are neutralized by coexpression with cognate antitoxin VapB11. The polypeptide is Ribonuclease VapC11 (Mycobacterium tuberculosis (strain CDC 1551 / Oshkosh)).